The sequence spans 928 residues: Sodium/calcium exchanger 3 (928 aa).

The signal sequence occupies residues Met1–Ala30. Over Glu31–Lys73 the chain is Extracellular. The N-linked (GlcNAc...) asparagine glycan is linked to Asn45. The chain crosses the membrane as a helical span at residues Ile74 to Ile94. Residues Ala95–Glu147 are Cytoplasmic-facing. Residues Ile148 to Ser168 form a helical membrane-spanning segment. Thr169 is a topological domain (extracellular). The chain crosses the membrane as a helical span at residues Ile170–Pro190. Residues Asp191–Arg201 are Cytoplasmic-facing. Residues Val202–Ala222 form a helical membrane-spanning segment. The Extracellular segment spans residues Val223–Gln230. A helical membrane pass occupies residues Val231–Ala251. At Asp252 to Ser727 the chain is on the cytoplasmic side. Residues Lys253 to Gly272 form a putative calmodulin-binding region region. 2 consecutive Calx-beta domains span residues Glu390–Ser485 and Ala519–Met618. Ca(2+)-binding residues include Glu409, Asp445, Asp470, Asp471, Ile473, Glu475, Glu478, Asp525, Asp526, Asp527, Glu543, Asp579, Asp605, and Glu673. Residues Cys728–Pro748 traverse the membrane as a helical segment. Residues Pro749 to Gly755 lie on the Extracellular side of the membrane. A helical transmembrane segment spans residues Trp756 to Leu776. Residues Ala777–His779 are Cytoplasmic-facing. The helical transmembrane segment at Phe780 to Thr800 threads the bilayer. At Ser801–Asn829 the chain is on the extracellular side. An N-linked (GlcNAc...) asparagine glycan is attached at Asn824. The chain crosses the membrane as a helical span at residues Ala830–Met850. Residues Gln851 to Thr861 are Cytoplasmic-facing. A helical membrane pass occupies residues Leu862–Tyr882. Residues Arg883–Trp904 lie on the Extracellular side of the membrane. A helical membrane pass occupies residues Leu905 to Ile925. Over Lys926 to Phe928 the chain is Cytoplasmic.

This sequence belongs to the Ca(2+):cation antiporter (CaCA) (TC 2.A.19) family. SLC8 subfamily. Interacts with AKAP1. Detected in gray and white matter in the spinal cord. Detected in hippocampus neurons. Detected in brain cortex neurons. Detected in skeletal muscle (at protein level). Isoform 1 and isoform 2 are highly expressed in brain; levels are higher for isoform 2. Isoform 1 and isoform 2 are detected in soleus muscle; levels are higher for isoform 1. Detected in gastrocnemius muscle.

Its subcellular location is the cell membrane. It is found in the perikaryon. It localises to the cell projection. The protein localises to the dendrite. The protein resides in the dendritic spine. Its subcellular location is the sarcolemma. It is found in the cytoplasm. It localises to the sarcoplasm. The protein localises to the cell junction. The protein resides in the mitochondrion outer membrane. Its subcellular location is the perinuclear region. It is found in the endoplasmic reticulum membrane. It carries out the reaction Ca(2+)(in) + 3 Na(+)(out) = Ca(2+)(out) + 3 Na(+)(in). Calcium transport is stimulated by cytoplasmic Ca(2+) and is inhibited by Na(+). Isoform 1 is more sensitive to stimulation by Ca(2+) than isoform 2. Isoform 2 is more sensitive to inactivation by Na(+). Mediates the electrogenic exchange of Ca(2+) against Na(+) ions across the cell membrane, and thereby contributes to the regulation of cytoplasmic Ca(2+) levels and Ca(2+)-dependent cellular processes. Contributes to cellular Ca(2+) homeostasis in excitable cells, both in muscle and in brain. In a first phase, voltage-gated channels mediate the rapid increase of cytoplasmic Ca(2+) levels due to release of Ca(2+) stores from the endoplasmic reticulum. SLC8A3 mediates the export of Ca(2+) from the cell during the next phase, so that cytoplasmic Ca(2+) levels rapidly return to baseline. Contributes to Ca(2+) transport during excitation-contraction coupling in muscle. In neurons, contributes to the rapid decrease of cytoplasmic Ca(2+) levels back to baseline after neuronal activation, and thereby contributes to modulate synaptic plasticity, learning and memory. Required for normal oligodendrocyte differentiation and for normal myelination. Mediates Ca(2+) efflux from mitochondria and contributes to mitochondrial Ca(2+) ion homeostasis. Isoform 1 displays higher calcium exchanger activity than isoform 2, probably because isoform 1 has a lower threshold for activation by cytoplasmic Ca(2+). This is Sodium/calcium exchanger 3 from Mus musculus (Mouse).